The chain runs to 160 residues: Photosystem II extrinsic protein V (160 aa).

Residues 1 to 25 (MKRFFLVAIASVLFFFNTMVGSANA) form the signal peptide. Heme c is bound by residues cysteine 62, cysteine 65, histidine 66, and histidine 117.

The protein belongs to the cytochrome c family. PsbV subfamily. In terms of assembly, PSII is composed of 1 copy each of membrane proteins PsbA, PsbB, PsbC, PsbD, PsbE, PsbF, PsbH, PsbI, PsbJ, PsbK, PsbL, PsbM, PsbT, PsbX, PsbY, PsbZ, Psb30/Ycf12, peripheral proteins PsbO, CyanoQ (PsbQ), PsbU, PsbV and a large number of cofactors. It forms dimeric complexes. The cyanobacterial oxygen-evolving complex is composed of PsbO, CyanoQ (PsbQ), PsbV and PsbU. Heme c is required as a cofactor.

It is found in the cellular thylakoid membrane. Functionally, one of the extrinsic, lumenal subunits of photosystem II (PSII). PSII is a light-driven water plastoquinone oxidoreductase, using light energy to abstract electrons from H(2)O, generating a proton gradient subsequently used for ATP formation. The extrinsic proteins stabilize the structure of photosystem II oxygen-evolving complex (OEC), the ion environment of oxygen evolution and protect the OEC against heat-induced inactivation. Low-potential cytochrome c that plays a role in the OEC of PSII, required for normal function or stabilization of PSII. The polypeptide is Photosystem II extrinsic protein V (Synechocystis sp. (strain ATCC 27184 / PCC 6803 / Kazusa)).